The following is a 688-amino-acid chain: Polyribonucleotide nucleotidyltransferase (688 aa).

Residues D484 and D490 each coordinate Mg(2+). The region spanning 550–609 (PQTEIFNVAPDKIIEIIGQGGRVIKEIVEKFEVKIDLNTPSGEVKIMGNKERVLKTKEFI) is the KH domain. Residues 626 to 688 (DEVLEAQVKR…NKGKIALDLA (63 aa)) form the S1 motif domain.

Belongs to the polyribonucleotide nucleotidyltransferase family. Requires Mg(2+) as cofactor.

It is found in the cytoplasm. The catalysed reaction is RNA(n+1) + phosphate = RNA(n) + a ribonucleoside 5'-diphosphate. In terms of biological role, involved in mRNA degradation. Catalyzes the phosphorolysis of single-stranded polyribonucleotides processively in the 3'- to 5'-direction. The sequence is that of Polyribonucleotide nucleotidyltransferase from Helicobacter pylori (strain J99 / ATCC 700824) (Campylobacter pylori J99).